Reading from the N-terminus, the 302-residue chain is Sulfate adenylyltransferase subunit 2 (302 aa).

The protein belongs to the PAPS reductase family. CysD subfamily. Heterodimer composed of CysD, the smaller subunit, and CysN.

It catalyses the reaction sulfate + ATP + H(+) = adenosine 5'-phosphosulfate + diphosphate. It functions in the pathway sulfur metabolism; hydrogen sulfide biosynthesis; sulfite from sulfate: step 1/3. Functionally, with CysN forms the ATP sulfurylase (ATPS) that catalyzes the adenylation of sulfate producing adenosine 5'-phosphosulfate (APS) and diphosphate, the first enzymatic step in sulfur assimilation pathway. APS synthesis involves the formation of a high-energy phosphoric-sulfuric acid anhydride bond driven by GTP hydrolysis by CysN coupled to ATP hydrolysis by CysD. This Zymomonas mobilis subsp. mobilis (strain ATCC 31821 / ZM4 / CP4) protein is Sulfate adenylyltransferase subunit 2.